A 150-amino-acid polypeptide reads, in one-letter code: 3-dehydroquinate dehydratase (150 aa).

Tyr26 functions as the Proton acceptor in the catalytic mechanism. 3 residues coordinate substrate: Asn77, His83, and Asp90. The active-site Proton donor is His103. Substrate contacts are provided by residues 104–105 (LS) and Arg114.

It belongs to the type-II 3-dehydroquinase family. Homododecamer.

It catalyses the reaction 3-dehydroquinate = 3-dehydroshikimate + H2O. It functions in the pathway metabolic intermediate biosynthesis; chorismate biosynthesis; chorismate from D-erythrose 4-phosphate and phosphoenolpyruvate: step 3/7. Its function is as follows. Catalyzes a trans-dehydration via an enolate intermediate. The chain is 3-dehydroquinate dehydratase from Citrobacter koseri (strain ATCC BAA-895 / CDC 4225-83 / SGSC4696).